We begin with the raw amino-acid sequence, 157 residues long: Arginine repressor (157 aa).

Belongs to the ArgR family.

It is found in the cytoplasm. It participates in amino-acid biosynthesis; L-arginine biosynthesis [regulation]. Functionally, regulates arginine biosynthesis genes. The sequence is that of Arginine repressor from Bacteroides fragilis (strain YCH46).